We begin with the raw amino-acid sequence, 408 residues long: Snake venom 5'-nucleotidase (408 aa).

2 residues coordinate Zn(2+): His-54 and His-77. N-linked (GlcNAc...) asparagine glycosylation is found at Asn-167 and Asn-181. Cystine bridges form between Cys-187-Cys-192 and Cys-199-Cys-221. Arg-188 provides a ligand contact to AMP. AMP-binding residues include Asn-224, Arg-229, and Phe-252. A disulfide bridge connects residues Cys-311 and Cys-314. Positions 335 and 341 each coordinate AMP. 2 propeptides (removed in mature form) span residues 385 to 388 (DGTL) and 385 to 408 (DGTLFQAQLFLTWGLCISLLFFIL).

Belongs to the 5'-nucleotidase family. As to quaternary structure, homodimer. Venom 5'-nucleotidases (or a part thereof) may be released into the venom via exosome-like vesicles. They may be attached via a GPI anchor to the membrane of these vesicles. Soluble forms of 5'-nucleotidase might be released by cleavage of the ectodomain in the exosome-like vesicles or venom gland cells. In terms of tissue distribution, expressed by the venom gland.

It localises to the membrane. It carries out the reaction a ribonucleoside 5'-phosphate + H2O = a ribonucleoside + phosphate. It catalyses the reaction AMP + H2O = adenosine + phosphate. The enzyme catalyses GMP + H2O = guanosine + phosphate. The catalysed reaction is ADP + H2O = AMP + phosphate + H(+). Its activity is regulated as follows. Is potently inhibited by metal ions Fe(3+), Cu(2+) and Zn(2+). Is enhanced by Mn(2+). Ca(2+) and Mg(2+) have no effect. In terms of biological role, hydrolyzes nucleotides into nucleosides. Prefers AMP as the substrate but also cleaves GMP and ADP. Does not affect AMP, cAMP and cGMP. Inhibits ADP- and collagen-induced platelet aggregation. Snake venom 5'-nucleotidases are widely distributed among venomous snake taxa, but there is a lack of information about their biological activities. They have been shown to inhibit platelet aggregation. This effect may be due to the liberation of inhibitory AMP or adenosine by its action on ADP released upon initiation of aggregation. Venom 5'-nucleotidases are also known to synergistically act in vivo with other toxins like ADPases, phospholipases, and disintegrins to exert a more pronounced anti-coagulant effect. This Macrovipera lebetinus (Levantine viper) protein is Snake venom 5'-nucleotidase.